We begin with the raw amino-acid sequence, 186 residues long: Shikimate kinase (186 aa).

15–20 (GAGKTT) serves as a coordination point for ATP. Residue Thr19 coordinates Mg(2+). Asp37, Arg61, and Gly83 together coordinate substrate. Arg121 contacts ATP. Arg140 is a binding site for substrate.

Belongs to the shikimate kinase family. As to quaternary structure, monomer. Mg(2+) serves as cofactor.

The protein localises to the cytoplasm. The enzyme catalyses shikimate + ATP = 3-phosphoshikimate + ADP + H(+). It functions in the pathway metabolic intermediate biosynthesis; chorismate biosynthesis; chorismate from D-erythrose 4-phosphate and phosphoenolpyruvate: step 5/7. Its function is as follows. Catalyzes the specific phosphorylation of the 3-hydroxyl group of shikimic acid using ATP as a cosubstrate. This is Shikimate kinase from Psychrobacter arcticus (strain DSM 17307 / VKM B-2377 / 273-4).